Reading from the N-terminus, the 60-residue chain is Potassium channel toxin alpha-KTx 15.8 (60 aa).

An N-terminal signal peptide occupies residues 1-22; that stretch reads MKFSSIILLTLLICSMSIFGNC. At Gln23 the chain carries Pyrrolidone carboxylic acid. Disulfide bonds link Cys30-Cys50, Cys35-Cys55, and Cys39-Cys57.

The protein belongs to the short scorpion toxin superfamily. Potassium channel inhibitor family. Alpha-KTx 15 subfamily. As to expression, expressed by the venom gland.

It is found in the secreted. In terms of biological role, blocker of A-type voltage-gated potassium channels of cerebellar granular cells. May also inhibit Kv4/KCND when coexpressed with DPP6 or DPP10. The occlusion of the outer entry of the K(+) conducting pore is partially reversible and affects both open and closed channels. It shares the same target in rat brain than BmTX3 (AC Q8I0L5) and AmmTX3 (AC P60208). Also shows a weak inhibition on Kv1.2/KCNA2 and Kv1.3/KCNA3 voltage-gated potassium channels. In Olivierus martensii (Manchurian scorpion), this protein is Potassium channel toxin alpha-KTx 15.8.